The chain runs to 78 residues: D-alanyl carrier protein (78 aa).

Residues 1 to 78 (MEFREQVLNL…KIVEALEELR (78 aa)) form the Carrier domain. Ser36 carries the O-(pantetheine 4'-phosphoryl)serine modification.

This sequence belongs to the DltC family. In terms of processing, 4'-phosphopantetheine is transferred from CoA to a specific serine of apo-DCP.

It localises to the cytoplasm. It participates in cell wall biogenesis; lipoteichoic acid biosynthesis. Its function is as follows. Carrier protein involved in the D-alanylation of lipoteichoic acid (LTA). The loading of thioester-linked D-alanine onto DltC is catalyzed by D-alanine--D-alanyl carrier protein ligase DltA. The DltC-carried D-alanyl group is further transferred to cell membrane phosphatidylglycerol (PG) by forming an ester bond, probably catalyzed by DltD. D-alanylation of LTA plays an important role in modulating the properties of the cell wall in Gram-positive bacteria, influencing the net charge of the cell wall. The polypeptide is D-alanyl carrier protein (Staphylococcus aureus (strain Mu50 / ATCC 700699)).